A 1893-amino-acid chain; its full sequence is MMDSVLEEDVTVPGTLSGCSGLVPSVPDDLDGINPNAGLGNGVLPNVSEETVSPTRARNMKDFENQITELKKENFNLKLRIYFLEERMQQEFHGPTEHIYKTNIELKVEVESLKRELQEREQLLIKASKAVESLAEAGGSEIQRVKEDARKKVQQVEDLLTKRILLLEKDVTAAQAELEKAFAGTETEKALRLRLESKLSEMKKMHEGDLAMALVLDEKDRLIEELKLSLKSKEALIQCLKEEKSQMASPDENVSSGELRGLCAAPREEKXRETEAAQMEHQKERNSFEERIQALEEDLREKEREIATEKKNSLKRDKAIQGLTMALKSKEKXVEELNSEIEKLXAAFAKAREALQKAQTQEFQGSEDYETALSGKEALSAALRSQNLTKSTENHRLRRSIKKITQELSDLQQERERLEKDLEEAHREKSKGDCTIRDLRNEVEKLRNEVNEREKAMENRYKSLLSESNKKLHNQEQVVKHLTESTNQKDVLLQKFNEKDLEVIQQNHYLMAAEDLELRSESLITEKCSSQQPPGSKTIFSKEKKQSSDYEELIQVLKKEQDIYTHLVKSLQESDSINNLQAELNNIFALRKQLEQDVLSYQNLRKTLEEQISXIRRREEESFSLYSDQTSYLSICLEENNRFQVEHFSQEELKKKVSDLIQLVKELYTDNQHLKKTIFDLSCMGFQGNGFPDRLASTEQTELLASKEDEDTIKIGEDDEINFLSDEHLQQSNEIMKDLSKGGCKNGYLRHTESKISDCDGAHAPGCLEEGAFINLLAPLFNEKATLLLESRPDLLKVVRELLLGQLFLTEQEVSGEHLDGKTEKTPKQKGELVHFVQTNSFSKPHDELKLSCEAQLVKAGEVPKVGLKDASVQTVATEGDLLRFKHEATREAWEEKPINTALSAEHRPENLHGVPGWQAALLSLPGVTNREAKKSRLPILIKPSRSLGNMYRLPATQEVVTQLQSQILELQGELKEFKTCNKQLHQKLILAEAVMEGRPTPDKTLLNAQPPVGAAYQDSPGEQKGIKTTSSVWRDKEMDSDQQTSYEIDSEICPPDDLASLPSCKENPEDVLSPTSVATYLSSKSQPSAKVSVMGTDQSESINTSNETEYLKQKIHDLETELEAYQNFIFQLQKHSQCSEAIITVLCGTEGAQDGLSKPKSGSDGEEMTFSSLHQVRYVKHVKILGPLAPEMIDSRVLENLKQQLEEQEYKLQKEQNLNMQLFSEIHNLQNKFRDLSPPRYDSLVQSQARELSLQRQQIKDGHGICVISRQHMNTMIKAFEELLQASDVDYCVAEGFQEQLNQCAELLEKLEKLFLNGKSVGVEMNTQIELMERIEEDNLTYQHLLPESPEPSASHALSDYETSEKSFFSQDQKQDNETEKTSVMVNNFSQDLLMEHIQEIRTLRKRLEESIKTNEKLRKQLERQGSEFDQGSTNIFASGSELHSSLTSEIHFLRKQNQALNAMLIKGSRDKQKENDKLRESLSRKTVSLEHLQREYASVKEENERLQKEGSEKERHNQQLIQEVRCSGQELSRVQEEVKLRQQLLSQNDKLLQSLRVELKAYEKLDEEHRRLREASGEGWKGQDPFRDLHSLLMEIQALRLQLERSIETSSTLQGRLEEQLARGAEKAQEGALTLAVQAVSIPEVPLQLDKHDGDKYPMESDNSFDLFDSSQAVTPKSVSETPPLSGNDTDSLSCDSGSSATSTPCVSRLVTGHHLWASKNGRHVLGLIEDYEALLKQISQGQRLLAEMDVQTQEAPSSTSQELGTKGPHPAPLSKFVSSVSTAKLTLEEAYRRLKLLWRVSLPEDGQCPLHCEQIGEMKAEVTKLHKKLFEQEKKLQNTMKLLQLSKRQEKVIFDQLVVTHKILRKARGNLELRPGGSHPGTCSPSRPGS.

A CM1 motif; interacts with the gTuRC region spans residues 51-94 (TVSPTRARNMKDFENQITELKKENFNLKLRIYFLEERMQQEFHG). The interval 58 to 196 (RNMKDFENQI…TEKALRLRLE (139 aa)) is interaction with NCKAP5L. Ser-547 is modified (phosphoserine). The interval 926–1208 (PGVTNREAKK…LENLKQQLEE (283 aa)) is interaction with MAPRE1. Residue Thr-1001 is modified to Phosphothreonine. Residues 1015–1071 (AAYQDSPGEQKGIKTTSSVWRDKEMDSDQQTSYEIDSEICPPDDLASLPSCKENPED) are disordered. The interval 1196 to 1893 (SRVLENLKQQ…GTCSPSRPGS (698 aa)) is interaction with PCNT and AKAP9. Ser-1238 carries the phosphoserine modification. Disordered stretches follow at residues 1347–1381 (LPESPEPSASHALSDYETSEKSFFSQDQKQDNETE) and 1467–1486 (IKGSRDKQKENDKLRESLSR). Basic and acidic residues predominate over residues 1469-1486 (GSRDKQKENDKLRESLSR). Position 1490 is a phosphoserine (Ser-1490). The segment covering 1500–1519 (SVKEENERLQKEGSEKERHN) has biased composition (basic and acidic residues). Positions 1500-1521 (SVKEENERLQKEGSEKERHNQQ) are disordered. Residues Ser-1663 and Ser-1666 each carry the phosphoserine modification. 2 disordered regions span residues 1675–1706 (AVTPKSVSETPPLSGNDTDSLSCDSGSSATST) and 1752–1774 (DVQTQEAPSSTSQELGTKGPHPA). The segment at 1726 to 1768 (HVLGLIEDYEALLKQISQGQRLLAEMDVQTQEAPSSTSQELGT) is interaction with CDK5R1. Over residues 1753–1766 (VQTQEAPSSTSQEL) the composition is skewed to polar residues. The required for centrosomal attachment, Golgi localization and CALM1 interaction stretch occupies residues 1861–1870 (VVTHKILRKA). The segment at 1874 to 1893 (LELRPGGSHPGTCSPSRPGS) is disordered. The segment covering 1884–1893 (GTCSPSRPGS) has biased composition (polar residues). A Phosphoserine modification is found at Ser-1893.

Homodimer. Interacts with CDK5R1 (p35 form). CDK5RAP1, CDK5RAP2 and CDK5RAP3 show competitive binding to CDK5R1. May form a complex with CDK5R1 and CDK5. Interacts with pericentrin/PCNT; the interaction is leading to centrosomal and Golgi localization of CDK5RAP2 and PCNT. Interacts with AKAP9; the interaction targets CDK5RAP2 and AKAP9 to Golgi apparatus. Interacts with MAPRE1; the interaction is direct and targets CDK5RAP2 and EB1/MAPRE1 to microtubule plus ends. Interacts with TUBG1; the interaction is leading to the centrosomal localization of CDK5RAP2 and TUBG1. Interacts with TUBGCP3. Interacts with CALM1. Interacts with CDC20. Interacts with CEP68; degradation of CEP68 in early mitosis leads to removal of CDK5RAP2 from the centrosome which promotes centriole disengagement and subsequent centriole separation. Interacts with NCKAP5L. Forms a pericentrosomal complex with AKAP9, MAPRE1 and PDE4DIP isoform 13/MMG8/SMYLE; within this complex, MAPRE1 binding to CDK5RAP2 may be mediated by PDE4DIP. Interacts with LGALS3BP; this interaction may connect the pericentrosomal complex to the gamma-tubulin ring complex (gTuRC) to promote microtubule assembly and acetylation. Interacts with CCDC66. Associates (via CM1 motif) with TUBGCP2 of the gTuRC; the interaction plays a role in gTuRC activation. In terms of processing, phosphorylated in vitro by CDK5.

The protein resides in the cytoplasm. Its subcellular location is the cytoskeleton. The protein localises to the microtubule organizing center. It localises to the centrosome. It is found in the golgi apparatus. Potential regulator of CDK5 activity via its interaction with CDK5R1. Negative regulator of centriole disengagement (licensing) which maintains centriole engagement and cohesion. Involved in regulation of mitotic spindle orientation. Plays a role in the spindle checkpoint activation by acting as a transcriptional regulator of both BUBR1 and MAD2 promoter. Together with EB1/MAPRE1, may promote microtubule polymerization, bundle formation, growth and dynamics at the plus ends. Regulates centrosomal maturation by recruitment of the gamma-tubulin ring complex (gTuRC) onto centrosomes. In complex with PDE4DIP isoform 13/MMG8/SMYLE, MAPRE1 and AKAP9, contributes to microtubules nucleation and extension from the centrosome to the cell periphery. Required for the recruitment of AKAP9 to centrosomes. Plays a role in neurogenesis. The sequence is that of CDK5 regulatory subunit-associated protein 2 (CDK5RAP2) from Pan troglodytes (Chimpanzee).